A 454-amino-acid polypeptide reads, in one-letter code: Serine/threonine-protein kinase NLK2 (454 aa).

The region spanning 67-356 (PEPDRPIGYG…AKDALAHPYL (290 aa)) is the Protein kinase domain. ATP is bound by residues 73-81 (IGYGAFGVV) and Lys96. The active-site Proton acceptor is the Asp193.

The protein belongs to the protein kinase superfamily. CMGC Ser/Thr protein kinase family. MAP kinase subfamily. As to quaternary structure, interacts with sox11, hmgxb4/hmg2l1, rnf138/narf, stat3.1 and mef2a. Mg(2+) is required as a cofactor.

It is found in the nucleus. The protein localises to the cytoplasm. The enzyme catalyses L-seryl-[protein] + ATP = O-phospho-L-seryl-[protein] + ADP + H(+). It carries out the reaction L-threonyl-[protein] + ATP = O-phospho-L-threonyl-[protein] + ADP + H(+). Its activity is regulated as follows. Activated by tyrosine and threonine phosphorylation. Negatively regulates Wnt/beta-catenin-signaling during development. Plays a role together with sox11 in neural induction during early embryogenesis. Involved in TGFbeta-mediated mesoderm induction in early embryos, acting downstream of map3k7/tak1 to phosphorylate stat3. Augments the rnf138/narf-directed ubiquitination and degradation of tcf/lef by enhancing the association of rnf138/narf and tcf/lef. Phosphorylates mef2a to play a role in anterior neural development, including eye formation. In Xenopus tropicalis (Western clawed frog), this protein is Serine/threonine-protein kinase NLK2 (nlk.2).